The primary structure comprises 421 residues: ATP-dependent RNA helicase RhlB (421 aa).

The short motif at 9 to 37 (QKFSDFALHPKVVEALEKKGFHNCTPIQA) is the Q motif element. A Helicase ATP-binding domain is found at 40–219 (LPLTLAGRDV…FEQMNNAEYI (180 aa)). Position 53–60 (53–60 (AQTGTGKT)) interacts with ATP. A DEAD box motif is present at residues 165 to 168 (DEAD). The region spanning 245 to 390 (RLLQTLIEEE…VSKYNPDALM (146 aa)) is the Helicase C-terminal domain. The disordered stretch occupies residues 392 to 421 (DLPKPLRLTRPRTGNGPRRTGAPRNRRRSG). The span at 402 to 414 (PRTGNGPRRTGAP) shows a compositional bias: low complexity.

The protein belongs to the DEAD box helicase family. RhlB subfamily. In terms of assembly, component of the RNA degradosome, which is a multiprotein complex involved in RNA processing and mRNA degradation.

Its subcellular location is the cytoplasm. It catalyses the reaction ATP + H2O = ADP + phosphate + H(+). DEAD-box RNA helicase involved in RNA degradation. Has RNA-dependent ATPase activity and unwinds double-stranded RNA. The sequence is that of ATP-dependent RNA helicase RhlB from Escherichia coli O157:H7 (strain EC4115 / EHEC).